The following is a 402-amino-acid chain: Apolipoprotein L3 (402 aa).

This sequence belongs to the apolipoprotein L family. Widely expressed; the highest levels are in prostate, lung and placenta; also detected in kidney, bone marrow, spleen, thymus, spinal cord, adrenal gland, salivary gland, trachea and mammary gland; levels are low in brain, heart, fetal liver, pancreas and testis.

It localises to the cytoplasm. Its function is as follows. May affect the movement of lipids in the cytoplasm or allow the binding of lipids to organelles. The protein is Apolipoprotein L3 (APOL3) of Homo sapiens (Human).